Here is an 83-residue protein sequence, read N- to C-terminus: Retinal cone rhodopsin-sensitive cGMP 3',5'-cyclic phosphodiesterase subunit gamma (83 aa).

Residues 1–54 (MSDSPSLSPPAPSQGPTTPRKGPPKFKQRQTRQFKSKPPKKGVKGFGDDIPGME) are disordered. The segment covering 22–43 (GPPKFKQRQTRQFKSKPPKKGV) has biased composition (basic residues).

This sequence belongs to the rod/cone cGMP-PDE gamma subunit family. In terms of assembly, tetramer composed of two catalytic chains (alpha and beta), and two inhibitory chains (gamma).

The catalysed reaction is 3',5'-cyclic GMP + H2O = GMP + H(+). Participates in processes of transmission and amplification of the visual signal. cGMP-PDEs are the effector molecules in G-protein-mediated phototransduction in vertebrate rods and cones. The chain is Retinal cone rhodopsin-sensitive cGMP 3',5'-cyclic phosphodiesterase subunit gamma (Pde6h) from Mus musculus (Mouse).